The chain runs to 456 residues: Peptide chain release factor PrfB1, chloroplastic (456 aa).

The N-terminal 58 residues, 1-58 (MSMELTVLGPLAGRSFAIAGKPKLLLLRPTNLPLLRLSLPLSLPNFSSSSRFNSPIVF), are a transit peptide targeting the chloroplast.

The protein belongs to the prokaryotic/mitochondrial release factor family. Expressed in leaves, stems and flowers.

It is found in the plastid. The protein resides in the chloroplast stroma. Directs the termination of translation in response to the peptide chain termination codon UGA. Required for the proper translation, stability and normal processing of UGA-containing polycistronic transcripts in chloroplasts. The protein is Peptide chain release factor PrfB1, chloroplastic of Arabidopsis thaliana (Mouse-ear cress).